Reading from the N-terminus, the 211-residue chain is MYQPDFPPVPFRSGLYPVVDSVQWIERLLDAGVRTLQLRIKDRRDEEVEADVVAAIALGRRYNARLFINDYWRLAIKHQAYGVHLGQEDLQATDLNAIRAAGLRLGVSTHDDMEIDVALAARPSYIALGHVFPTQTKQMPSAPQGLEQLARHVERLADYPTVAIGGISLARAPAVIATGVGSIAVVSAITQAADWRLATAQLLEIAGVGDE.

4-amino-2-methyl-5-(diphosphooxymethyl)pyrimidine-binding positions include 37–41 (QLRIK) and asparagine 69. Residues aspartate 70 and aspartate 89 each coordinate Mg(2+). A 4-amino-2-methyl-5-(diphosphooxymethyl)pyrimidine-binding site is contributed by serine 108. Position 134–136 (134–136 (TQT)) interacts with 2-[(2R,5Z)-2-carboxy-4-methylthiazol-5(2H)-ylidene]ethyl phosphate. Lysine 137 is a 4-amino-2-methyl-5-(diphosphooxymethyl)pyrimidine binding site. Residues glycine 166 and 186–187 (VS) each bind 2-[(2R,5Z)-2-carboxy-4-methylthiazol-5(2H)-ylidene]ethyl phosphate.

This sequence belongs to the thiamine-phosphate synthase family. The cofactor is Mg(2+).

It carries out the reaction 2-[(2R,5Z)-2-carboxy-4-methylthiazol-5(2H)-ylidene]ethyl phosphate + 4-amino-2-methyl-5-(diphosphooxymethyl)pyrimidine + 2 H(+) = thiamine phosphate + CO2 + diphosphate. The enzyme catalyses 2-(2-carboxy-4-methylthiazol-5-yl)ethyl phosphate + 4-amino-2-methyl-5-(diphosphooxymethyl)pyrimidine + 2 H(+) = thiamine phosphate + CO2 + diphosphate. It catalyses the reaction 4-methyl-5-(2-phosphooxyethyl)-thiazole + 4-amino-2-methyl-5-(diphosphooxymethyl)pyrimidine + H(+) = thiamine phosphate + diphosphate. Its pathway is cofactor biosynthesis; thiamine diphosphate biosynthesis; thiamine phosphate from 4-amino-2-methyl-5-diphosphomethylpyrimidine and 4-methyl-5-(2-phosphoethyl)-thiazole: step 1/1. Its function is as follows. Condenses 4-methyl-5-(beta-hydroxyethyl)thiazole monophosphate (THZ-P) and 2-methyl-4-amino-5-hydroxymethyl pyrimidine pyrophosphate (HMP-PP) to form thiamine monophosphate (TMP). This is Thiamine-phosphate synthase from Escherichia coli O139:H28 (strain E24377A / ETEC).